A 241-amino-acid chain; its full sequence is Phycocyanobilin:ferredoxin oxidoreductase (241 aa).

Belongs to the HY2 family.

The catalysed reaction is (2R,3Z)-phycocyanobilin + 4 oxidized [2Fe-2S]-[ferredoxin] = biliverdin IXalpha + 4 reduced [2Fe-2S]-[ferredoxin] + 4 H(+). Functionally, catalyzes the four-electron reduction of biliverdin IX-alpha (2-electron reduction at both the A and D rings); the reaction proceeds via an isolatable 2-electron intermediate, 181,182-dihydrobiliverdin. The chain is Phycocyanobilin:ferredoxin oxidoreductase from Prochlorococcus marinus (strain MIT 9515).